The following is a 356-amino-acid chain: Peptide-N(4)-(N-acetyl-beta-glucosaminyl)asparagine amidase (356 aa).

Cys-129, Cys-132, Cys-163, and Cys-166 together coordinate Zn(2+). Cys-189 functions as the Nucleophile in the catalytic mechanism. Residues His-216 and Asp-233 contribute to the active site. Position 236 (Glu-236) interacts with substrate. The disordered stretch occupies residues 300–356; the sequence is IRQNLSPSEKEELKREDEAEERELASYNADEPQEAQMPRQSGSVEWTKARGEGGSDD. Composition is skewed to basic and acidic residues over residues 307 to 316 and 346 to 356; these read SEKEELKRED and TKARGEGGSDD.

This sequence belongs to the transglutaminase-like superfamily. PNGase family. The cofactor is Zn(2+).

It localises to the cytoplasm. It carries out the reaction Hydrolysis of an N(4)-(acetyl-beta-D-glucosaminyl)asparagine residue in which the glucosamine residue may be further glycosylated, to yield a (substituted) N-acetyl-beta-D-glucosaminylamine and a peptide containing an aspartate residue.. Functionally, specifically deglycosylates the denatured form of N-linked glycoproteins in the cytoplasm and assists their proteasome-mediated degradation. Cleaves the beta-aspartyl-glucosamine (GlcNAc) of the glycan and the amide side chain of Asn, converting Asn to Asp. Prefers proteins containing high-mannose over those bearing complex type oligosaccharides. Can recognize misfolded proteins in the endoplasmic reticulum that are exported to the cytosol to be destroyed and deglycosylate them, while it has no activity toward native proteins. Deglycosylation is a prerequisite for subsequent proteasome-mediated degradation of some, but not all, misfolded glycoproteins. In Yarrowia lipolytica (strain CLIB 122 / E 150) (Yeast), this protein is Peptide-N(4)-(N-acetyl-beta-glucosaminyl)asparagine amidase (PNG1).